We begin with the raw amino-acid sequence, 401 residues long: uncharacterized protein (401 aa).

Belongs to the serpin family.

May act as an inhibitor for a host chymotrypsin-like protease. This is an uncharacterized protein from Acanthamoeba polyphaga mimivirus (APMV).